A 504-amino-acid chain; its full sequence is Probable cytochrome P450 513F1 (504 aa).

Residues 1–21 (MILSLLFLFVITLYFLIPSRI) form a helical membrane-spanning segment. C449 is a heme binding site.

This sequence belongs to the cytochrome P450 family. Requires heme as cofactor.

Its subcellular location is the membrane. This chain is Probable cytochrome P450 513F1 (cyp513F1), found in Dictyostelium discoideum (Social amoeba).